Consider the following 277-residue polypeptide: Glutamate racemase (277 aa).

Residues 9–10 and 41–42 each bind substrate; these read DS and YG. The active-site Proton donor/acceptor is the C73. 74–75 contacts substrate; sequence NT. C183 serves as the catalytic Proton donor/acceptor. 184–185 contributes to the substrate binding site; sequence TH.

The protein belongs to the aspartate/glutamate racemases family.

It catalyses the reaction L-glutamate = D-glutamate. The protein operates within cell wall biogenesis; peptidoglycan biosynthesis. Functionally, provides the (R)-glutamate required for cell wall biosynthesis. In Shewanella denitrificans (strain OS217 / ATCC BAA-1090 / DSM 15013), this protein is Glutamate racemase.